The following is a 235-amino-acid chain: Nitrile hydratase subunit beta (235 aa).

Belongs to the nitrile hydratase subunit beta family. In terms of assembly, heterodimer of an alpha and a beta chain.

The catalysed reaction is an aliphatic primary amide = an aliphatic nitrile + H2O. In terms of biological role, NHase catalyzes the hydration of various nitrile compounds to the corresponding amides. In Rhodococcus sp, this protein is Nitrile hydratase subunit beta (nthB).